Reading from the N-terminus, the 229-residue chain is Uracil-DNA glycosylase (229 aa).

The Proton acceptor role is filled by D65.

Belongs to the uracil-DNA glycosylase (UDG) superfamily. UNG family.

It is found in the cytoplasm. The enzyme catalyses Hydrolyzes single-stranded DNA or mismatched double-stranded DNA and polynucleotides, releasing free uracil.. Its function is as follows. Excises uracil residues from the DNA which can arise as a result of misincorporation of dUMP residues by DNA polymerase or due to deamination of cytosine. The sequence is that of Uracil-DNA glycosylase from Limosilactobacillus reuteri (strain DSM 20016) (Lactobacillus reuteri).